The primary structure comprises 371 residues: Queuine tRNA-ribosyltransferase (371 aa).

Asp-90 acts as the Proton acceptor in catalysis. Residues 90 to 94 (DSGGF), Asp-144, Gln-188, and Gly-215 contribute to the substrate site. Positions 246–252 (GVGTPED) are RNA binding. The active-site Nucleophile is the Asp-265. The interval 270 to 274 (TRNAR) is RNA binding; important for wobble base 34 recognition. 4 residues coordinate Zn(2+): Cys-303, Cys-305, Cys-308, and His-334.

This sequence belongs to the queuine tRNA-ribosyltransferase family. Homodimer. Within each dimer, one monomer is responsible for RNA recognition and catalysis, while the other monomer binds to the replacement base PreQ1. Zn(2+) is required as a cofactor.

The catalysed reaction is 7-aminomethyl-7-carbaguanine + guanosine(34) in tRNA = 7-aminomethyl-7-carbaguanosine(34) in tRNA + guanine. Its pathway is tRNA modification; tRNA-queuosine biosynthesis. In terms of biological role, catalyzes the base-exchange of a guanine (G) residue with the queuine precursor 7-aminomethyl-7-deazaguanine (PreQ1) at position 34 (anticodon wobble position) in tRNAs with GU(N) anticodons (tRNA-Asp, -Asn, -His and -Tyr). Catalysis occurs through a double-displacement mechanism. The nucleophile active site attacks the C1' of nucleotide 34 to detach the guanine base from the RNA, forming a covalent enzyme-RNA intermediate. The proton acceptor active site deprotonates the incoming PreQ1, allowing a nucleophilic attack on the C1' of the ribose to form the product. After dissociation, two additional enzymatic reactions on the tRNA convert PreQ1 to queuine (Q), resulting in the hypermodified nucleoside queuosine (7-(((4,5-cis-dihydroxy-2-cyclopenten-1-yl)amino)methyl)-7-deazaguanosine). In Neisseria gonorrhoeae (strain ATCC 700825 / FA 1090), this protein is Queuine tRNA-ribosyltransferase.